Here is a 210-residue protein sequence, read N- to C-terminus: Large ribosomal subunit protein bL25 (210 aa).

The disordered stretch occupies residues 179–210; the sequence is LPPQQEEEIHSGEQQEPGQPEAEEGRETTPEG. Over residues 201-210 the composition is skewed to basic and acidic residues; the sequence is EEGRETTPEG.

This sequence belongs to the bacterial ribosomal protein bL25 family. CTC subfamily. As to quaternary structure, part of the 50S ribosomal subunit; part of the 5S rRNA/L5/L18/L25 subcomplex. Contacts the 5S rRNA. Binds to the 5S rRNA independently of L5 and L18.

This is one of the proteins that binds to the 5S RNA in the ribosome where it forms part of the central protuberance. This chain is Large ribosomal subunit protein bL25, found in Geobacillus thermodenitrificans (strain NG80-2).